The following is a 145-amino-acid chain: D-aminoacyl-tRNA deacylase (145 aa).

A Gly-cisPro motif, important for rejection of L-amino acids motif is present at residues 137–138; sequence GP.

This sequence belongs to the DTD family. In terms of assembly, homodimer.

The protein resides in the cytoplasm. It carries out the reaction glycyl-tRNA(Ala) + H2O = tRNA(Ala) + glycine + H(+). The enzyme catalyses a D-aminoacyl-tRNA + H2O = a tRNA + a D-alpha-amino acid + H(+). In terms of biological role, an aminoacyl-tRNA editing enzyme that deacylates mischarged D-aminoacyl-tRNAs. Also deacylates mischarged glycyl-tRNA(Ala), protecting cells against glycine mischarging by AlaRS. Acts via tRNA-based rather than protein-based catalysis; rejects L-amino acids rather than detecting D-amino acids in the active site. By recycling D-aminoacyl-tRNA to D-amino acids and free tRNA molecules, this enzyme counteracts the toxicity associated with the formation of D-aminoacyl-tRNA entities in vivo and helps enforce protein L-homochirality. The sequence is that of D-aminoacyl-tRNA deacylase from Shewanella putrefaciens (strain CN-32 / ATCC BAA-453).